The following is a 495-amino-acid chain: Glutamate--tRNA ligase (495 aa).

The 'HIGH' region signature appears at 12–22 (PSPTGHLHIGN). Residues 259 to 263 (KLSKR) carry the 'KMSKS' region motif. Lys262 is an ATP binding site.

The protein belongs to the class-I aminoacyl-tRNA synthetase family. Glutamate--tRNA ligase type 1 subfamily. As to quaternary structure, monomer.

It localises to the cytoplasm. It catalyses the reaction tRNA(Glu) + L-glutamate + ATP = L-glutamyl-tRNA(Glu) + AMP + diphosphate. Catalyzes the attachment of glutamate to tRNA(Glu) in a two-step reaction: glutamate is first activated by ATP to form Glu-AMP and then transferred to the acceptor end of tRNA(Glu). This Ligilactobacillus salivarius (strain UCC118) (Lactobacillus salivarius) protein is Glutamate--tRNA ligase.